The primary structure comprises 424 residues: UDP-galactose transporter homolog 1 (424 aa).

The next 6 helical transmembrane spans lie at 57-77 (LWQLAFCVAGIYASFLSWGVL), 107-127 (IVLNTIQSTFAAVTGFLYLYF), 144-164 (IIFPLVLVSISSSLASPFGYA), 173-193 (TFILAKSCKLLPVMFLHLTIF), 197-217 (YPLYKYGVVLLVTLGVATFTL), and 234-254 (TSGSSAWGIFLLSINLLLDGL). Asn256 carries N-linked (GlcNAc...) asparagine glycosylation. Transmembrane regions (helical) follow at residues 293-313 (LLIMPHLSSTGILHAILPVPI), 337-357 (SVLGFAAFGAMGQLFIFYTLS), and 380-400 (VFWFGHSLSAGQWLGIGLVFG).

The protein belongs to the nucleotide-sugar transporter family. SLC35B subfamily.

It localises to the endoplasmic reticulum membrane. May be involved in specific transport of UDP-Gal from the cytosol to the Golgi lumen. Involved in the maintenance of optimal conditions for the folding of secretory pathway proteins in the endoplasmic reticulum. The polypeptide is UDP-galactose transporter homolog 1 (hut1) (Emericella nidulans (strain FGSC A4 / ATCC 38163 / CBS 112.46 / NRRL 194 / M139) (Aspergillus nidulans)).